The chain runs to 786 residues: Spermatogenesis-associated protein 20 (786 aa).

The N-terminal stretch at 1–22 (MLGARAWLGRVLLLPRAGAGLA) is a signal peptide. A disordered region spans residues 23–61 (ASRRGSSSRDKDRSATVSSSVPMPAGGKGSHPSSTPQRV). The residue at position 649 (serine 649) is a Phosphoserine.

It is found in the secreted. May play a role in fertility regulation. In Homo sapiens (Human), this protein is Spermatogenesis-associated protein 20 (SPATA20).